Reading from the N-terminus, the 135-residue chain is Putative pre-16S rRNA nuclease (135 aa).

This sequence belongs to the YqgF nuclease family.

The protein localises to the cytoplasm. Its function is as follows. Could be a nuclease involved in processing of the 5'-end of pre-16S rRNA. The sequence is that of Putative pre-16S rRNA nuclease from Clostridium acetobutylicum (strain ATCC 824 / DSM 792 / JCM 1419 / IAM 19013 / LMG 5710 / NBRC 13948 / NRRL B-527 / VKM B-1787 / 2291 / W).